The following is a 443-amino-acid chain: Cysteine proteinase B (443 aa).

Residues 1–27 (MATSRAALCAVAVVCVVLAAACAPARA) form the signal peptide. Residues 28-125 (IHVGTPAAAL…YRKARADLSA (98 aa)) constitute a propeptide, activation peptide. 2 cysteine pairs are disulfide-bonded: C147-C188 and C181-C226. C150 is an active-site residue. N228 is a glycosylation site (N-linked (GlcNAc...) asparagine). A disulfide bond links C281 and C329. Active-site residues include H288 and N308.

The protein belongs to the peptidase C1 family.

This Leishmania mexicana protein is Cysteine proteinase B (LMCPB).